The following is a 504-amino-acid chain: uncharacterized protein (504 aa).

The segment at 431 to 483 (GEAEKYRKLQDGDEDEEGTGKPEPKKARRKGFGGKFAPKHEEKVTRAVGVNSE) is disordered.

Belongs to the CBF/MAK21 family.

This is an uncharacterized protein from Caenorhabditis elegans.